A 264-amino-acid polypeptide reads, in one-letter code: Apolipoprotein A-I (264 aa).

Residues 1–18 form the signal peptide; that stretch reads MKAVVLALAVLFLTGSQA. 2 tandem repeats follow at residues 67 to 88 and 89 to 110. The 10 X approximate tandem repeats stretch occupies residues 67 to 264; sequence LHLLDNWDTL…DEASKKLNAQ (198 aa). Methionine 109 is subject to Methionine sulfoxide. A 3; half-length repeat occupies 111–121; sequence KDLEEVKVKVQ. Repeat copies occupy residues 122–143, 144–165, 166–187, 188–207, and 208–229. One copy of the 9; half-length repeat lies at 230 to 240; sequence PALEDLRQGLM. Residues 241 to 264 form repeat 10; that stretch reads PVLENLKTTVLAAIDEASKKLNAQ.

This sequence belongs to the apolipoprotein A1/A4/E family. As to quaternary structure, homodimer. Interacts with APOA1BP and CLU. Component of a sperm activating protein complex (SPAP), consisting of APOA1, an immunoglobulin heavy chain, an immunoglobulin light chain and albumin. Interacts with NDRG1. Interacts with SCGB3A2. Interacts with NAXE and YJEFN3. Glycosylated. Post-translationally, palmitoylated. In terms of processing, phosphorylation sites are present in the extracellular medium.

The protein resides in the secreted. Participates in the reverse transport of cholesterol from tissues to the liver for excretion by promoting cholesterol efflux from tissues and by acting as a cofactor for the lecithin cholesterol acyltransferase (LCAT). As part of the SPAP complex, activates spermatozoa motility. The polypeptide is Apolipoprotein A-I (APOA1) (Jaculus jaculus (Lesser Egyptian jerboa)).